The following is a 309-amino-acid chain: Probable 4-hydroxy-2-oxoglutarate aldolase, mitochondrial (309 aa).

49-50 (SN) provides a ligand contact to substrate. The Schiff-base intermediate with substrate role is filled by Lys-173.

The protein belongs to the DapA family.

It catalyses the reaction (4S)-4-hydroxy-2-oxoglutarate = glyoxylate + pyruvate. The enzyme catalyses (4R)-4-hydroxy-2-oxoglutarate = glyoxylate + pyruvate. With respect to regulation, inhibited by divalent cations. Its function is as follows. Catalyzes the final step in the metabolic pathway of hydroxyproline. Involved in osmoadaptation. The protein is Probable 4-hydroxy-2-oxoglutarate aldolase, mitochondrial of Emericella nidulans (strain FGSC A4 / ATCC 38163 / CBS 112.46 / NRRL 194 / M139) (Aspergillus nidulans).